Reading from the N-terminus, the 400-residue chain is Elongation factor Tu (400 aa).

In terms of domain architecture, tr-type G spans lysine 10–arginine 210. The tract at residues glycine 19–threonine 26 is G1. Glycine 19–threonine 26 is a binding site for GTP. Residue threonine 26 coordinates Mg(2+). The interval glycine 60–alanine 64 is G2. The segment at aspartate 81–glycine 84 is G3. Residues aspartate 81–histidine 85 and asparagine 136–aspartate 139 contribute to the GTP site. The G4 stretch occupies residues asparagine 136–aspartate 139. The segment at serine 174–isoleucine 176 is G5.

The protein belongs to the TRAFAC class translation factor GTPase superfamily. Classic translation factor GTPase family. EF-Tu/EF-1A subfamily. As to quaternary structure, monomer.

The protein resides in the cytoplasm. The enzyme catalyses GTP + H2O = GDP + phosphate + H(+). GTP hydrolase that promotes the GTP-dependent binding of aminoacyl-tRNA to the A-site of ribosomes during protein biosynthesis. The protein is Elongation factor Tu of Dehalococcoides mccartyi (strain ATCC BAA-2266 / KCTC 15142 / 195) (Dehalococcoides ethenogenes (strain 195)).